The chain runs to 140 residues: UPF0179 protein Msp_0996 (140 aa).

Belongs to the UPF0179 family.

The protein is UPF0179 protein Msp_0996 of Methanosphaera stadtmanae (strain ATCC 43021 / DSM 3091 / JCM 11832 / MCB-3).